Reading from the N-terminus, the 130-residue chain is Con-Ins G2 (130 aa).

Positions 1–24 (MTTSSYFLLVALGLLLYVRQSFST) are cleaved as a signal peptide. Cystine bridges form between Cys-29/Cys-100, Cys-41/Cys-103, Cys-53/Cys-116, and Cys-102/Cys-107. Pro-34 is modified (4-hydroxyproline; partial). The interval 54–74 (EEEEARRGGTNDGGKKRRRAS) is disordered. A propeptide spans 59–92 (RRGGTNDGGKKRRRASPLWKRRRFLSMLKARAKR) (c peptide). The residue at position 111 (Glu-111) is a 4-carboxyglutamate; partial.

The protein belongs to the insulin family. In terms of assembly, heterodimer of A and B chains; disulfide-linked. In terms of tissue distribution, expressed by the venom gland.

Its subcellular location is the secreted. Functionally, this venom insulin, from a fish-hunting cone snail, facilitates prey capture by rapidly inducing hypoglycemic shock. Intraperitoneal injection of this peptide into zebrafish lowers blood glucose with the same potency than human insulin. In vivo, when applied to water, this peptide reduces overall locomotor activity of zebrafish larvae, observed as a significant decrease in the percentage of time spent swimming and movement frequency. This chain is Con-Ins G2, found in Conus geographus (Geography cone).